The sequence spans 1407 residues: DNA-directed RNA polymerase subunit beta' (1407 aa).

Zn(2+) is bound by residues Cys-70, Cys-72, Cys-85, and Cys-88. 3 residues coordinate Mg(2+): Asp-460, Asp-462, and Asp-464. The Zn(2+) site is built by Cys-814, Cys-888, Cys-895, and Cys-898.

The protein belongs to the RNA polymerase beta' chain family. As to quaternary structure, the RNAP catalytic core consists of 2 alpha, 1 beta, 1 beta' and 1 omega subunit. When a sigma factor is associated with the core the holoenzyme is formed, which can initiate transcription. It depends on Mg(2+) as a cofactor. Requires Zn(2+) as cofactor.

The enzyme catalyses RNA(n) + a ribonucleoside 5'-triphosphate = RNA(n+1) + diphosphate. Its function is as follows. DNA-dependent RNA polymerase catalyzes the transcription of DNA into RNA using the four ribonucleoside triphosphates as substrates. This is DNA-directed RNA polymerase subunit beta' from Erwinia tasmaniensis (strain DSM 17950 / CFBP 7177 / CIP 109463 / NCPPB 4357 / Et1/99).